Here is a 150-residue protein sequence, read N- to C-terminus: Centrin-B (150 aa).

3 consecutive EF-hand domains span residues 12 to 46, 80 to 114, and 115 to 150; these read DQIS…LGCE, DSMS…IGEE, and CSDS…KKVL. 4 residues coordinate Ca(2+): aspartate 128, aspartate 130, aspartate 132, and glutamate 139.

The protein belongs to the centrin family.

The protein localises to the cytoplasm. It is found in the cytoskeleton. The protein resides in the microtubule organizing center. Its subcellular location is the centrosome. Its function is as follows. Plays a fundamental role in microtubule-organizing center structure and function. The sequence is that of Centrin-B (cenB) from Dictyostelium discoideum (Social amoeba).